A 450-amino-acid polypeptide reads, in one-letter code: tRNA modification GTPase MnmE (450 aa).

The (6S)-5-formyl-5,6,7,8-tetrahydrofolate site is built by R23, E79, and K118. One can recognise a TrmE-type G domain in the interval 214–374 (GITLILVGKP…LKEHILNKVG (161 aa)). N224 contacts K(+). GTP is bound by residues 224–229 (NAGKSS), 243–249 (TSIAGTT), and 268–271 (DTAG). S228 lines the Mg(2+) pocket. Residues T243, I245, and T248 each coordinate K(+). T249 contributes to the Mg(2+) binding site. K450 serves as a coordination point for (6S)-5-formyl-5,6,7,8-tetrahydrofolate.

Belongs to the TRAFAC class TrmE-Era-EngA-EngB-Septin-like GTPase superfamily. TrmE GTPase family. Homodimer. Heterotetramer of two MnmE and two MnmG subunits. Requires K(+) as cofactor.

It localises to the cytoplasm. Its function is as follows. Exhibits a very high intrinsic GTPase hydrolysis rate. Involved in the addition of a carboxymethylaminomethyl (cmnm) group at the wobble position (U34) of certain tRNAs, forming tRNA-cmnm(5)s(2)U34. This Francisella tularensis subsp. tularensis (strain WY96-3418) protein is tRNA modification GTPase MnmE.